The following is a 214-amino-acid chain: pH-sensitive calcium channel (214 aa).

The Cytoplasmic segment spans residues 1 to 15 (MQATVHESKQSIMQR). Residues 16–37 (ILTVFVFTLLIATVGLFIGQFV) traverse the membrane as a helical segment. Residues 38-44 (PVALMLP) lie on the Extracellular side of the membrane. Residues 45-59 (LSILEVAMIILAFWM) form a helical membrane-spanning segment. At 60–66 (RRRKAVG) the chain is on the cytoplasmic side. A helical membrane pass occupies residues 67 to 86 (YAFVYTFAFVSGITLFPIVS). Residues 87 to 95 (HYASIAGAY) lie on the Extracellular side of the membrane. Residues 96 to 117 (VVLEAFGSTFVIFAVLGTIGAK) traverse the membrane as a helical segment. Residues 118–122 (MKKDL) lie on the Cytoplasmic side of the membrane. The chain crosses the membrane as a helical span at residues 123–146 (SFLWSFLLVAVLALAVVGIFNIFS). Topologically, residues 147–151 (PLNSA) are extracellular. Residues 152–175 (AMMAYSVIGTIVFSLYILYDLNQI) traverse the membrane as a helical segment. The Cytoplasmic portion of the chain corresponds to 176 to 185 (KHRHITEDLI). The helical transmembrane segment at 186-207 (PVMALSLYLDFINLFINLLRFF) threads the bilayer. The Extracellular portion of the chain corresponds to 208 to 214 (GILSSDD).

This sequence belongs to the BI1 family. As to quaternary structure, monomer.

It is found in the cell membrane. The catalysed reaction is Ca(2+)(in) = Ca(2+)(out). Its activity is regulated as follows. The calcium-release activity is mediated by two factors: pH and transmembrane ion gradient. It was proposed, based on an MD simulation, that the conserved aspartyl dyad (Asp-171-Asp-195) regulates Ca(2+) binding, pH sensing, and the channel pore opening and closing, and that protonation of Asp-171 probably weakens its interaction with Arg-60, facilitating the opening of the channel. Another study using nanodiscs suggests that Asp-171 is not a pH sensor regulating the pore dynamics; instead, it is only involved in the gating of calcium ions. When crystallized in detergents at different pH conditions, the transition between open and closed conformations is regulated by pH. Ca(2+) binding is inhibited by Na(+), K(+), Li(+), Yb(3+) and Lu(3+), but not by Mg(2+) and Mn(2+). In terms of biological role, calcium channel that probably plays a role in the regulation of calcium homeostasis. Uptakes calcium ions and mediates calcium flux in proteoliposomes in a pH-dependent manner. When expressed in E.coli in the presence of high extracellular calcium concentrations, shows calcium-leak activity, increasing intracellular calcium concentration. It can also mediate Ca(2+) flux from the endoplamic reticulum (ER) when expressed in permeabilized mammalian cells. Calcium transport activity is also detected in ER-like lipid vesicles. The protein is pH-sensitive calcium channel of Bacillus subtilis (strain 168).